Consider the following 902-residue polypeptide: Calcium-activated chloride channel regulator 3A-1 (902 aa).

The signal sequence occupies residues 1 to 21; the sequence is MVPGLQVLLFLTLHLLQNTES. Residues 45–199 form a metalloprotease domain region; it reads DERLIPSIKE…RITGTNVVHN (155 aa). Residue N75 is glycosylated (N-linked (GlcNAc...) asparagine). H155 serves as a coordination point for Zn(2+). E156 is an active-site residue. Zn(2+)-binding residues include H159 and D166. The VWFA domain maps to 308–476; sequence VVCLVLDKSG…NSLIDAFSRI (169 aa). 7 N-linked (GlcNAc...) asparagine glycosylation sites follow: N504, N515, N630, N687, N697, N809, and N814.

This sequence belongs to the CLCR family. Part of a complex composed of complement component C3, CLCA1/CLCA3, A2ML1/OH and ALB/serum albumin. Post-translationally, glycosylated. In terms of processing, the 130-kDa product is autoproteolytically processed by the metalloprotease domain and yields two subunits, a 90-kDa protein and a group of 32- to 38-kDa proteins. The cleavage is necessary for calcium-activated chloride channel (CaCC) activation activity. In terms of tissue distribution, highly expressed in skin and spleen, and at lower levels in kidney and liver. Also detected in lung and brain. Not detected in lung or brain. In lung, localizes to respiratory epithelia of the bronchi and trachea and the submucosal glands.

The protein localises to the cell membrane. In terms of biological role, plays a role in modulating chloride current across the plasma membrane in a calcium-dependent manner. The chain is Calcium-activated chloride channel regulator 3A-1 from Mus musculus (Mouse).